We begin with the raw amino-acid sequence, 95 residues long: MVEVVKKQIECKIKINSVNGIVSLDCETKVIFNVKDSEMPYAVSSIKEIGFVETIKTDQVKNMINRIVEELDKRIDEIKEGLNELEKSGLTIEVD.

A coiled-coil region spans residues 60–89; the sequence is VKNMINRIVEELDKRIDEIKEGLNELEKSG.

This is an uncharacterized protein from Sulfolobus islandicus filamentous virus (isolate Iceland/Hveragerdi) (SIFV).